The primary structure comprises 152 residues: Deoxyuridine 5'-triphosphate nucleotidohydrolase (152 aa).

Residues 71–73 (RSG), N84, 88–90 (LID), and M98 contribute to the substrate site.

The protein belongs to the dUTPase family. It depends on Mg(2+) as a cofactor.

The enzyme catalyses dUTP + H2O = dUMP + diphosphate + H(+). Its pathway is pyrimidine metabolism; dUMP biosynthesis; dUMP from dCTP (dUTP route): step 2/2. Functionally, this enzyme is involved in nucleotide metabolism: it produces dUMP, the immediate precursor of thymidine nucleotides and it decreases the intracellular concentration of dUTP so that uracil cannot be incorporated into DNA. In Shewanella sediminis (strain HAW-EB3), this protein is Deoxyuridine 5'-triphosphate nucleotidohydrolase.